Reading from the N-terminus, the 326-residue chain is DnaJ homolog subfamily B member 6 (326 aa).

One can recognise a J domain in the interval 2–69 (VDYYEVLGVQ…KKRDIYDKYG (68 aa)). Residues 2–146 (VDYYEVLGVQ…TGSFFSAFSG (145 aa)) form an interaction with HSP70 region. The interval 119-242 (FEDFFGNRRG…ADDDALAEER (124 aa)) is interaction with KRT18. Arginine 135 bears the Omega-N-methylarginine mark. The tract at residues 249–326 (ALPAQPAGLR…KKKKSTKGNH (78 aa)) is disordered. At serine 277 the chain carries Phosphoserine.

Homooligomer. Interacts with BAG3, HSPB8 and STUB1. Interacts with ALKBH1. Interacts with HSP70, KRT18 and PTTG. As to quaternary structure, interacts with histone deacetylases HDAC4, HDAC6, and SIRT2, HDAC activity is required for antiaggregation. In terms of tissue distribution, widely expressed. Highest levels in testis and brain, and lower levels in heart, spleen, intestine, ovary, placenta, lung, kidney, pancreas, thymus, prostate, skeletal muscle, liver and leukocytes. In testis, expressed in germ cells in the earlier stages of differentiation pathway as well as in spermatids. In brain, expressed at a higher level in hippocampus and thalamus and a lower level in amygdala, substantia nigra, corpus callosum and caudate nucleus.

It localises to the cytoplasm. Its subcellular location is the perinuclear region. It is found in the nucleus. The protein localises to the myofibril. The protein resides in the sarcomere. It localises to the z line. Has a stimulatory effect on the ATPase activity of HSP70 in a dose-dependent and time-dependent manner and hence acts as a co-chaperone of HSP70. Plays an indispensable role in the organization of KRT8/KRT18 filaments. Acts as an endogenous molecular chaperone for neuronal proteins including huntingtin. Suppresses aggregation and toxicity of polyglutamine-containing, aggregation-prone proteins. Also reduces cellular toxicity and caspase-3 activity. In terms of biological role, isoform B but not isoform A inhibits huntingtin aggregation. The polypeptide is DnaJ homolog subfamily B member 6 (DNAJB6) (Homo sapiens (Human)).